Consider the following 705-residue polypeptide: Polyribonucleotide nucleotidyltransferase (705 aa).

Mg(2+) contacts are provided by Asp486 and Asp492. Residues 553 to 612 enclose the KH domain; the sequence is PRIIKFKINPEKIRDVIGKGGAVIRALTEETGTTIDISDDGSVTIASISNEGGEQAKRRI. The S1 motif domain occupies 622–690; it reads GKIYEGTVLK…DKGRLRLSMK (69 aa).

The protein belongs to the polyribonucleotide nucleotidyltransferase family. The cofactor is Mg(2+).

The protein localises to the cytoplasm. The enzyme catalyses RNA(n+1) + phosphate = RNA(n) + a ribonucleoside 5'-diphosphate. Involved in mRNA degradation. Catalyzes the phosphorolysis of single-stranded polyribonucleotides processively in the 3'- to 5'-direction. In Nitrosomonas eutropha (strain DSM 101675 / C91 / Nm57), this protein is Polyribonucleotide nucleotidyltransferase.